Consider the following 303-residue polypeptide: N-acetyl-D-glucosamine kinase (303 aa).

ATP contacts are provided by residues Gly-4–Lys-11 and Gly-133–Leu-140. Zn(2+) is bound by residues His-157, Cys-177, Cys-179, and Cys-184.

Belongs to the ROK (NagC/XylR) family. NagK subfamily.

The enzyme catalyses N-acetyl-D-glucosamine + ATP = N-acetyl-D-glucosamine 6-phosphate + ADP + H(+). The protein operates within cell wall biogenesis; peptidoglycan recycling. Its function is as follows. Catalyzes the phosphorylation of N-acetyl-D-glucosamine (GlcNAc) derived from cell-wall degradation, yielding GlcNAc-6-P. This Salmonella heidelberg (strain SL476) protein is N-acetyl-D-glucosamine kinase.